The primary structure comprises 98 residues: Putative zinc finger protein ORF98b (98 aa).

The segment at 54-77 adopts a C2H2-type zinc-finger fold; it reads GFCPYCHNHYRTFGILANHIMRSH.

In Acidianus convivator (ATV), this protein is Putative zinc finger protein ORF98b.